Reading from the N-terminus, the 305-residue chain is DNA-directed RNA polymerase 35 kDa subunit (305 aa).

It belongs to the poxviridae DNA-directed RNA polymerase 35 kDa subunit family. The DNA-dependent RNA polymerase used for intermediate and late genes expression consists of eight subunits 147 kDa, 133 kDa, 35 kDa, 30 kDa, 22 kDa, 19 kDa, 18 kDa and 7 kDa totalling more than 500 kDa in mass. The same holoenzyme, with the addition of the transcription-specificity factor RAP94, is used for early gene expression.

It is found in the virion. It catalyses the reaction RNA(n) + a ribonucleoside 5'-triphosphate = RNA(n+1) + diphosphate. In terms of biological role, part of the DNA-dependent RNA polymerase which catalyzes the transcription of viral DNA into RNA using the four ribonucleoside triphosphates as substrates. Responsible for the transcription of early, intermediate and late genes. DNA-dependent RNA polymerase associates with the early transcription factor (ETF), itself composed of D6 and A7, thereby allowing the early genes transcription. Late transcription, and probably also intermediate transcription, require newly synthesized RNA polymerase. This Bos taurus (Bovine) protein is DNA-directed RNA polymerase 35 kDa subunit (OPG156).